Reading from the N-terminus, the 713-residue chain is Probable tRNA (uracil-O(2)-)-methyltransferase (713 aa).

Disordered stretches follow at residues 49 to 92 (TLRS…REGT) and 480 to 508 (LHSRQGHPQSRPGGAHAPSAPQTAAHDAG). Serine 76 carries the post-translational modification Phosphoserine. Basic and acidic residues predominate over residues 79–89 (GEPESGPRASR). Serine 489 is modified (phosphoserine). A C3H1-type zinc finger spans residues 669 to 698 (FKTRICWFFAHHPDGCVLPAAQCPFAHGPE).

Belongs to the TRM44 family.

Its subcellular location is the cytoplasm. The enzyme catalyses uridine(44) in tRNA(Ser) + S-adenosyl-L-methionine = 2'-O-methyluridine(44) in tRNA(Ser) + S-adenosyl-L-homocysteine + H(+). In terms of biological role, probable adenosyl-L-methionine (AdoMet)-dependent tRNA (uracil-O(2)-)-methyltransferase. The sequence is that of Probable tRNA (uracil-O(2)-)-methyltransferase (Trmt44) from Mus musculus (Mouse).